Reading from the N-terminus, the 91-residue chain is MARSAKKGFYVEASLMKKVVNAIESKSKKPIKTWSRRSTIFPEFVGFTFQVHNGRQFIDVYVTDDMVGHKLGEFSPTRTYTGHGSEKGKKK.

The disordered stretch occupies residues 72–91; that stretch reads GEFSPTRTYTGHGSEKGKKK.

It belongs to the universal ribosomal protein uS19 family.

In terms of biological role, protein S19 forms a complex with S13 that binds strongly to the 16S ribosomal RNA. The protein is Small ribosomal subunit protein uS19 of Mycoplasma mobile (strain ATCC 43663 / 163K / NCTC 11711) (Mesomycoplasma mobile).